The chain runs to 155 residues: RNA pyrophosphohydrolase (155 aa).

Positions 5 to 149 (EYRSGVGIML…KKPLYEKILS (145 aa)) constitute a Nudix hydrolase domain. Positions 39–60 (GGLEAKETPEVGVLRELEEETG) match the Nudix box motif.

This sequence belongs to the Nudix hydrolase family. RppH subfamily. It depends on a divalent metal cation as a cofactor.

In terms of biological role, accelerates the degradation of transcripts by removing pyrophosphate from the 5'-end of triphosphorylated RNA, leading to a more labile monophosphorylated state that can stimulate subsequent ribonuclease cleavage. The sequence is that of RNA pyrophosphohydrolase from Zymomonas mobilis subsp. mobilis (strain ATCC 31821 / ZM4 / CP4).